The following is a 410-amino-acid chain: Protein LTV1 homolog (410 aa).

Disordered stretches follow at residues 142–165 (VYRSTRRGEDSEEEEDDDEDDEMY) and 325–378 (EMDI…ARKL). Acidic residues-rich tracts occupy residues 151–165 (DSEEEEDDDEDDEMY) and 325–345 (EMDIAEEDEDDDEDMEDDDDK). Residues 357-366 (PKNETPEQRS) are compositionally biased toward basic and acidic residues. Residues 363 to 389 (EQRSLRKKAVKEARKLRRVEKKANKTM) are a coiled coil. The span at 367-378 (LRKKAVKEARKL) shows a compositional bias: basic residues.

The protein belongs to the LTV1 family.

This is Protein LTV1 homolog from Caenorhabditis elegans.